The chain runs to 508 residues: Photosystem II CP47 reaction center protein (508 aa).

Helical transmembrane passes span 21-36 (SVHIMHTALVAGWAGS), 101-115 (IVFSGLCFLAAIWHW), 140-156 (GIHLFLSGVACFGFGAF), 203-218 (IAAGTLGILAGLFHLS), 237-252 (VLSSSIAAVFFAAFVV), and 457-472 (SFALLFFFGHIWHGAR).

It belongs to the PsbB/PsbC family. PsbB subfamily. As to quaternary structure, PSII is composed of 1 copy each of membrane proteins PsbA, PsbB, PsbC, PsbD, PsbE, PsbF, PsbH, PsbI, PsbJ, PsbK, PsbL, PsbM, PsbT, PsbX, PsbY, PsbZ, Psb30/Ycf12, at least 3 peripheral proteins of the oxygen-evolving complex and a large number of cofactors. It forms dimeric complexes. It depends on Binds multiple chlorophylls. PSII binds additional chlorophylls, carotenoids and specific lipids. as a cofactor.

The protein resides in the plastid. The protein localises to the chloroplast thylakoid membrane. Functionally, one of the components of the core complex of photosystem II (PSII). It binds chlorophyll and helps catalyze the primary light-induced photochemical processes of PSII. PSII is a light-driven water:plastoquinone oxidoreductase, using light energy to abstract electrons from H(2)O, generating O(2) and a proton gradient subsequently used for ATP formation. This chain is Photosystem II CP47 reaction center protein, found in Morus indica (Mulberry).